Reading from the N-terminus, the 605-residue chain is DNA primase (605 aa).

The CHC2-type zinc finger occupies 37-61; it reads CPFHADKNPSMHINPIKGFYHCFAC. Residues 248–329 form the Toprim domain; that stretch reads KEIIVCEGYM…DGKVAILQGG (82 aa). Mg(2+)-binding residues include Glu-254, Asp-298, and Asp-300.

It belongs to the DnaG primase family. Monomer. Interacts with DnaB. Requires Zn(2+) as cofactor. Mg(2+) serves as cofactor.

It catalyses the reaction ssDNA + n NTP = ssDNA/pppN(pN)n-1 hybrid + (n-1) diphosphate.. Its function is as follows. RNA polymerase that catalyzes the synthesis of short RNA molecules used as primers for DNA polymerase during DNA replication. In Campylobacter jejuni subsp. jejuni serotype O:2 (strain ATCC 700819 / NCTC 11168), this protein is DNA primase.